A 1372-amino-acid chain; its full sequence is DNA-directed RNA polymerase subunit beta (1372 aa).

This sequence belongs to the RNA polymerase beta chain family. The RNAP catalytic core consists of 2 alpha, 1 beta, 1 beta' and 1 omega subunit. When a sigma factor is associated with the core the holoenzyme is formed, which can initiate transcription.

It catalyses the reaction RNA(n) + a ribonucleoside 5'-triphosphate = RNA(n+1) + diphosphate. Its function is as follows. DNA-dependent RNA polymerase catalyzes the transcription of DNA into RNA using the four ribonucleoside triphosphates as substrates. This Nitratidesulfovibrio vulgaris (strain ATCC 29579 / DSM 644 / CCUG 34227 / NCIMB 8303 / VKM B-1760 / Hildenborough) (Desulfovibrio vulgaris) protein is DNA-directed RNA polymerase subunit beta.